Here is a 433-residue protein sequence, read N- to C-terminus: Enolase (433 aa).

Gln-167 serves as a coordination point for (2R)-2-phosphoglycerate. Glu-209 (proton donor) is an active-site residue. 3 residues coordinate Mg(2+): Asp-246, Glu-291, and Asp-318. The (2R)-2-phosphoglycerate site is built by Lys-343, Arg-372, Ser-373, and Lys-394. Residue Lys-343 is the Proton acceptor of the active site.

This sequence belongs to the enolase family. In terms of assembly, component of the RNA degradosome, a multiprotein complex involved in RNA processing and mRNA degradation. It depends on Mg(2+) as a cofactor.

It localises to the cytoplasm. The protein resides in the secreted. It is found in the cell surface. The enzyme catalyses (2R)-2-phosphoglycerate = phosphoenolpyruvate + H2O. Its pathway is carbohydrate degradation; glycolysis; pyruvate from D-glyceraldehyde 3-phosphate: step 4/5. Its function is as follows. Catalyzes the reversible conversion of 2-phosphoglycerate (2-PG) into phosphoenolpyruvate (PEP). It is essential for the degradation of carbohydrates via glycolysis. This chain is Enolase, found in Actinobacillus succinogenes (strain ATCC 55618 / DSM 22257 / CCUG 43843 / 130Z).